A 388-amino-acid chain; its full sequence is Na(+)/H(+) antiporter NhaA (388 aa).

The Cytoplasmic segment spans residues 1–11 (MKHLHRFFSSD). A helical membrane pass occupies residues 12-31 (ASGGIILIIAAILAMIMANS). Topologically, residues 32 to 58 (GATSGWYHDFLETPVQLRVGSLEINKN) are periplasmic. A helical membrane pass occupies residues 59 to 80 (MLLWINDALMAVFFLLVGLEVK). Residues 81–96 (RELMQGSLASLRQAAF) are Cytoplasmic-facing. A helical transmembrane segment spans residues 97 to 116 (PVIAAIGGMIVPALLYLAFN). Residues 117 to 122 (YADPIT) are Periplasmic-facing. The chain crosses the membrane as a helical span at residues 123 to 130 (REGWAIPA). The Cytoplasmic segment spans residues 131–154 (ATDIAFALGVLALLGSRVPLALKI). Residues 155-176 (FLMALAIIDDLGAIIIIALFYT) form a helical membrane-spanning segment. Topologically, residues 177–180 (NDLS) are periplasmic. A helical transmembrane segment spans residues 181–200 (MASLGVAAVAIAVLAVLNLC). The Cytoplasmic portion of the chain corresponds to 201–204 (GVRR). The helical transmembrane segment at 205 to 222 (TGVYILVGVVLWTAVLKS) threads the bilayer. Gly-223 is a topological domain (periplasmic). A helical membrane pass occupies residues 224–236 (VHATLAGVIVGFF). Residues 237-253 (IPLKEKHGRSPAKRLEH) lie on the Cytoplasmic side of the membrane. A helical transmembrane segment spans residues 254-272 (VLHPWVAYLILPLFAFANA). Topologically, residues 273 to 286 (GVSLQGVTLDGLTS) are periplasmic. A helical membrane pass occupies residues 287–310 (ILPLGIIAGLLIGKPLGISLFCWL). The Cytoplasmic portion of the chain corresponds to 311–339 (ALRLKLAHLPEGTTYQQIMAVGILCGIGF). A helical membrane pass occupies residues 340 to 350 (TMSIFIASLAF). The Periplasmic segment spans residues 351–357 (GSVDPEL). The chain crosses the membrane as a helical span at residues 358-380 (INWAKLGILVGSISSAVIGYSWL). Residues 381-388 (RVRLRPSV) lie on the Cytoplasmic side of the membrane.

This sequence belongs to the NhaA Na(+)/H(+) (TC 2.A.33) antiporter family.

It is found in the cell inner membrane. The catalysed reaction is Na(+)(in) + 2 H(+)(out) = Na(+)(out) + 2 H(+)(in). Its function is as follows. Na(+)/H(+) antiporter that extrudes sodium in exchange for external protons. The chain is Na(+)/H(+) antiporter NhaA from Escherichia coli O9:H4 (strain HS).